The primary structure comprises 718 residues: Ribosomal RNA large subunit methyltransferase K/L (718 aa).

The region spanning 44–155 is the THUMP domain; the sequence is DAYKVCIYSY…KQFVNVFLCL (112 aa).

This sequence belongs to the methyltransferase superfamily. RlmKL family.

The protein resides in the cytoplasm. It catalyses the reaction guanosine(2445) in 23S rRNA + S-adenosyl-L-methionine = N(2)-methylguanosine(2445) in 23S rRNA + S-adenosyl-L-homocysteine + H(+). It carries out the reaction guanosine(2069) in 23S rRNA + S-adenosyl-L-methionine = N(2)-methylguanosine(2069) in 23S rRNA + S-adenosyl-L-homocysteine + H(+). Specifically methylates the guanine in position 2445 (m2G2445) and the guanine in position 2069 (m7G2069) of 23S rRNA. The polypeptide is Ribosomal RNA large subunit methyltransferase K/L (Francisella tularensis subsp. novicida (strain U112)).